A 331-amino-acid polypeptide reads, in one-letter code: Gem-associated protein 2 (331 aa).

3 disordered regions span residues 1–23 (MDEF…NEPL), 101–130 (SNRP…LIPQ), and 151–222 (NNNN…TKKP). Positions 11–21 (VGEEIEPDDNE) are enriched in acidic residues. The span at 106-126 (NNNNNNNNNNNNNNNNNNNNN) shows a compositional bias: low complexity. Acidic residues predominate over residues 165–215 (DNQEDDDDDENNEDYEYNENKEEEEEEEEEEEEEEEVEEEEEEEEEEEEVV). Positions 173–224 (DENNEDYEYNENKEEEEEEEEEEEEEEEVEEEEEEEEEEEEVVDYSTKKPTL) form a coiled coil.

It belongs to the gemin-2 family.

It is found in the nucleus. It localises to the gem. Its subcellular location is the cytoplasm. In terms of biological role, the SMN complex catalyzes the assembly of small nuclear ribonucleoproteins (snRNPs), the building blocks of the spliceosome, and thereby plays an important role in the splicing of cellular pre-mRNAs. Most spliceosomal snRNPs contain a common set of Sm proteins SNRPB, SNRPD1, SNRPD2, SNRPD3, SNRPE, SNRPF and SNRPG that assemble in a heptameric protein ring on the Sm site of the small nuclear RNA to form the core snRNP (Sm core). In the cytosol, the Sm proteins SNRPD1, SNRPD2, SNRPE, SNRPF and SNRPG (5Sm) are trapped in an inactive 6S pICln-Sm complex by the chaperone CLNS1A that controls the assembly of the core snRNP. To assemble core snRNPs, the SMN complex accepts the trapped 5Sm proteins from CLNS1A. Binding of snRNA inside 5Sm ultimately triggers eviction of the SMN complex, thereby allowing binding of SNRPD3 and SNRPB to complete assembly of the core snRNP. Within the SMN complex, GEMIN2 constrains the conformation of 5Sm, thereby promoting 5Sm binding to snRNA containing the snRNP code (a nonameric Sm site and a 3'-adjacent stem-loop), thus preventing progression of assembly until a cognate substrate is bound. Its function is as follows. May play an essential role in spliceosomal snRNP assembly in the cytoplasm and may be required for pre-mRNA splicing in the nucleus. The polypeptide is Gem-associated protein 2 (gemin2) (Dictyostelium discoideum (Social amoeba)).